Reading from the N-terminus, the 140-residue chain is Protein E6 (140 aa).

2 zinc fingers span residues 27–63 (CIFCSHTVDLADLALFYLKKLSLVFRGNCYYACCSEC) and 100–136 (CICCLRLLDIVEKLDLLYSDETCYLIRGLWRGYCRNC).

It belongs to the papillomaviridae E6 protein family. In terms of assembly, forms homodimers. Interacts with ubiquitin-protein ligase UBE3A/E6-AP; this interaction stimulates UBE3A ubiquitin activity. Interacts with host BAK1.

Its subcellular location is the host cytoplasm. The protein localises to the host nucleus. In terms of biological role, plays a major role in the induction and maintenance of cellular transformation. E6 associates with host UBE3A/E6-AP ubiquitin-protein ligase and modulates its activity. Protects host keratinocytes from apoptosis by mediating the degradation of host BAK1. May also inhibit host immune response. The chain is Protein E6 from Human papillomavirus 4.